The primary structure comprises 154 residues: Protein X (154 aa).

Positions 68 to 117 (PCALRFTSARRMETTVNAHQVLPKVLYKRTLGLSAMSTTDLEAYFKDCLF) are mitochondrial targeting sequence.

It belongs to the orthohepadnavirus protein X family. As to quaternary structure, may form homodimer. May interact with host CEBPA, CFLAR, CREB1, DDB1, E4F1, HBXIP, HSPD1/HSP60, NFKBIA, POLR2E and SMAD4. Interacts with host SMC5-SMC6 complex and induces its degradation. Interacts with host TRPC4AP; leading to prevent ubiquitination of TRPC4AP. Interacts with host PLSCR1; this interaction promotes ubiquitination and degradation of HBx and impairs HBx-mediated cell proliferation. In terms of processing, a fraction may be phosphorylated in insect cells and HepG2 cells, a human hepatoblastoma cell line. Phosphorylated in vitro by host protein kinase C or mitogen-activated protein kinase. N-acetylated in insect cells.

The protein localises to the host cytoplasm. Its subcellular location is the host nucleus. It is found in the host mitochondrion. Its function is as follows. Multifunctional protein that plays a role in silencing host antiviral defenses and promoting viral transcription. Does not seem to be essential for HBV infection. May be directly involved in development of cirrhosis and liver cancer (hepatocellular carcinoma). Most of cytosolic activities involve modulation of cytosolic calcium. The effect on apoptosis is controversial depending on the cell types in which the studies have been conducted. May induce apoptosis by localizing in mitochondria and causing loss of mitochondrial membrane potential. May also modulate apoptosis by binding host CFLAR, a key regulator of the death-inducing signaling complex (DISC). Promotes viral transcription by using the host E3 ubiquitin ligase DDB1 to target the SMC5-SMC6 complex to proteasomal degradation. This host complex would otherwise bind to viral episomal DNA, and prevents its transcription. Moderately stimulates transcription of many different viral and cellular transcription elements. Promoters and enhancers stimulated by HBx contain DNA binding sites for NF-kappa-B, AP-1, AP-2, c-EBP, ATF/CREB, or the calcium-activated factor NF-AT. The chain is Protein X from Homo sapiens (Human).